The primary structure comprises 339 residues: Uroporphyrinogen decarboxylase (339 aa).

Residues 23-27 (RQAGR), aspartate 72, tyrosine 147, threonine 202, and histidine 315 each bind substrate.

Belongs to the uroporphyrinogen decarboxylase family. In terms of assembly, homodimer.

The protein localises to the cytoplasm. The enzyme catalyses uroporphyrinogen III + 4 H(+) = coproporphyrinogen III + 4 CO2. The protein operates within porphyrin-containing compound metabolism; protoporphyrin-IX biosynthesis; coproporphyrinogen-III from 5-aminolevulinate: step 4/4. Its function is as follows. Catalyzes the decarboxylation of four acetate groups of uroporphyrinogen-III to yield coproporphyrinogen-III. In Citrifermentans bemidjiense (strain ATCC BAA-1014 / DSM 16622 / JCM 12645 / Bem) (Geobacter bemidjiensis), this protein is Uroporphyrinogen decarboxylase.